A 338-amino-acid polypeptide reads, in one-letter code: ABC transporter I family member 6, chloroplastic (338 aa).

Residues 1–66 (MAGVNLQLRH…RTTRRSVIVS (66 aa)) constitute a chloroplast transit peptide. Residues 92–338 (LEVRDLRAVI…EKEGYKAISG (247 aa)) enclose the ABC transporter domain. An ATP-binding site is contributed by 126-133 (GKNGSGKS).

It belongs to the ABC transporter superfamily. ABCI family. Interacts with NAP6. In terms of tissue distribution, present in all organs, with higher levels in aerial parts.

The protein localises to the plastid. The protein resides in the chloroplast. Essential protein. Required during embryo development, especially at early stages. Involved in chloroplast differentiation. This chain is ABC transporter I family member 6, chloroplastic (ABCI6), found in Arabidopsis thaliana (Mouse-ear cress).